The following is a 383-amino-acid chain: uncharacterized protein (383 aa).

Disordered regions lie at residues 1–30 (MDLC…PTCT), 114–144 (ETKP…STAS), 262–289 (GEKR…ARTS), and 341–360 (AKDP…NSPQ). Over residues 10–26 (DLENGENNEIQSTEETE) the composition is skewed to acidic residues. Over residues 128–141 (SSPSQTQAAPQGPS) the composition is skewed to low complexity. Residues 262 to 271 (GEKRPSELAK) show a composition bias toward basic and acidic residues.

This is an uncharacterized protein from Macaca fascicularis (Crab-eating macaque).